The following is a 277-amino-acid chain: Shikimate dehydrogenase (NADP(+)) (277 aa).

Shikimate-binding positions include serine 15–serine 17 and threonine 62. Lysine 66 functions as the Proton acceptor in the catalytic mechanism. Shikimate-binding residues include asparagine 87 and aspartate 102. NADP(+)-binding positions include glycine 127–alanine 131, asparagine 151–lysine 156, and isoleucine 219. Tyrosine 221 lines the shikimate pocket. Position 242 (glycine 242) interacts with NADP(+).

It belongs to the shikimate dehydrogenase family. As to quaternary structure, homodimer.

The enzyme catalyses shikimate + NADP(+) = 3-dehydroshikimate + NADPH + H(+). The protein operates within metabolic intermediate biosynthesis; chorismate biosynthesis; chorismate from D-erythrose 4-phosphate and phosphoenolpyruvate: step 4/7. In terms of biological role, involved in the biosynthesis of the chorismate, which leads to the biosynthesis of aromatic amino acids. Catalyzes the reversible NADPH linked reduction of 3-dehydroshikimate (DHSA) to yield shikimate (SA). This chain is Shikimate dehydrogenase (NADP(+)), found in Bacillus cereus (strain 03BB102).